Here is a 612-residue protein sequence, read N- to C-terminus: Dihydroxy-acid dehydratase (612 aa).

Mg(2+) is bound at residue D81. [2Fe-2S] cluster is bound at residue C122. Mg(2+)-binding residues include D123 and K124. K124 is modified (N6-carboxylysine). C195 serves as a coordination point for [2Fe-2S] cluster. Residue E491 participates in Mg(2+) binding. Catalysis depends on S517, which acts as the Proton acceptor.

The protein belongs to the IlvD/Edd family. As to quaternary structure, homodimer. [2Fe-2S] cluster serves as cofactor. It depends on Mg(2+) as a cofactor.

It carries out the reaction (2R)-2,3-dihydroxy-3-methylbutanoate = 3-methyl-2-oxobutanoate + H2O. The enzyme catalyses (2R,3R)-2,3-dihydroxy-3-methylpentanoate = (S)-3-methyl-2-oxopentanoate + H2O. Its pathway is amino-acid biosynthesis; L-isoleucine biosynthesis; L-isoleucine from 2-oxobutanoate: step 3/4. The protein operates within amino-acid biosynthesis; L-valine biosynthesis; L-valine from pyruvate: step 3/4. Functions in the biosynthesis of branched-chain amino acids. Catalyzes the dehydration of (2R,3R)-2,3-dihydroxy-3-methylpentanoate (2,3-dihydroxy-3-methylvalerate) into 2-oxo-3-methylpentanoate (2-oxo-3-methylvalerate) and of (2R)-2,3-dihydroxy-3-methylbutanoate (2,3-dihydroxyisovalerate) into 2-oxo-3-methylbutanoate (2-oxoisovalerate), the penultimate precursor to L-isoleucine and L-valine, respectively. The chain is Dihydroxy-acid dehydratase from Psychromonas ingrahamii (strain DSM 17664 / CCUG 51855 / 37).